The chain runs to 413 residues: Tyrosine--tRNA ligase (413 aa).

Residue tyrosine 34 coordinates L-tyrosine. Positions 39–48 (PTSHSLTVGH) match the 'HIGH' region motif. Residues tyrosine 164 and glutamine 168 each contribute to the L-tyrosine site. The short motif at 225-229 (KFGKS) is the 'KMSKS' region element. ATP is bound at residue lysine 228. Residues 347–413 (ILLVDALVQT…GKKNNALIVF (67 aa)) form the S4 RNA-binding domain.

This sequence belongs to the class-I aminoacyl-tRNA synthetase family. TyrS type 1 subfamily. Homodimer.

It localises to the cytoplasm. It catalyses the reaction tRNA(Tyr) + L-tyrosine + ATP = L-tyrosyl-tRNA(Tyr) + AMP + diphosphate + H(+). Functionally, catalyzes the attachment of tyrosine to tRNA(Tyr) in a two-step reaction: tyrosine is first activated by ATP to form Tyr-AMP and then transferred to the acceptor end of tRNA(Tyr). This chain is Tyrosine--tRNA ligase, found in Onion yellows phytoplasma (strain OY-M).